We begin with the raw amino-acid sequence, 73 residues long: Long neurotoxin 1 (73 aa).

5 cysteine pairs are disulfide-bonded: C3–C21, C14–C42, C27–C31, C46–C57, and C58–C63.

This sequence belongs to the three-finger toxin family. Long-chain subfamily. Type II alpha-neurotoxin sub-subfamily. Expressed by the venom gland.

Its subcellular location is the secreted. Binds with high affinity to muscular (alpha-1/CHRNA1) and neuronal (alpha-7/CHRNA7) nicotinic acetylcholine receptor (nAChR) and inhibits acetylcholine from binding to the receptor, thereby impairing neuromuscular and neuronal transmission. This chain is Long neurotoxin 1, found in Ophiophagus hannah (King cobra).